The sequence spans 191 residues: Fe/S biogenesis protein NfuA (191 aa).

[4Fe-4S] cluster-binding residues include Cys149 and Cys152.

It belongs to the NfuA family. In terms of assembly, homodimer. It depends on [4Fe-4S] cluster as a cofactor.

Its function is as follows. Involved in iron-sulfur cluster biogenesis. Binds a 4Fe-4S cluster, can transfer this cluster to apoproteins, and thereby intervenes in the maturation of Fe/S proteins. Could also act as a scaffold/chaperone for damaged Fe/S proteins. The protein is Fe/S biogenesis protein NfuA of Escherichia coli O7:K1 (strain IAI39 / ExPEC).